Consider the following 259-residue polypeptide: Glutamate racemase (259 aa).

Substrate-binding positions include aspartate 7–serine 8 and tyrosine 39–glycine 40. The active-site Proton donor/acceptor is cysteine 70. Asparagine 71 to threonine 72 lines the substrate pocket. The active-site Proton donor/acceptor is cysteine 180. Residue threonine 181–histidine 182 coordinates substrate.

This sequence belongs to the aspartate/glutamate racemases family.

It carries out the reaction L-glutamate = D-glutamate. Its pathway is cell wall biogenesis; peptidoglycan biosynthesis. Functionally, provides the (R)-glutamate required for cell wall biosynthesis. This is Glutamate racemase from Persephonella marina (strain DSM 14350 / EX-H1).